Here is a 347-residue protein sequence, read N- to C-terminus: Glycerol-1-phosphate dehydrogenase [NAD(P)+] (347 aa).

Residues Gly90 to Asp94 and Thr112 to Ser115 each bind NAD(+). Residue Asp117 participates in substrate binding. Ser121 lines the NAD(+) pocket. Asp165 lines the substrate pocket. Residues Asp165 and His245 each contribute to the Zn(2+) site. His249 contributes to the substrate binding site. His262 lines the Zn(2+) pocket.

This sequence belongs to the glycerol-1-phosphate dehydrogenase family. In terms of assembly, homodimer. Zn(2+) is required as a cofactor.

It is found in the cytoplasm. The enzyme catalyses sn-glycerol 1-phosphate + NAD(+) = dihydroxyacetone phosphate + NADH + H(+). The catalysed reaction is sn-glycerol 1-phosphate + NADP(+) = dihydroxyacetone phosphate + NADPH + H(+). It participates in membrane lipid metabolism; glycerophospholipid metabolism. Functionally, catalyzes the NAD(P)H-dependent reduction of dihydroxyacetonephosphate (DHAP or glycerone phosphate) to glycerol 1-phosphate (G1P). The G1P thus generated is used as the glycerophosphate backbone of phospholipids in the cellular membranes of Archaea. The protein is Glycerol-1-phosphate dehydrogenase [NAD(P)+] of Thermofilum pendens (strain DSM 2475 / Hrk 5).